We begin with the raw amino-acid sequence, 159 residues long: Transcription elongation factor GreA (159 aa).

A coiled-coil region spans residues 47 to 77 (SENAEYDAARDKQATIENEITEIQHILDNYE).

The protein belongs to the GreA/GreB family.

In terms of biological role, necessary for efficient RNA polymerase transcription elongation past template-encoded arresting sites. The arresting sites in DNA have the property of trapping a certain fraction of elongating RNA polymerases that pass through, resulting in locked ternary complexes. Cleavage of the nascent transcript by cleavage factors such as GreA or GreB allows the resumption of elongation from the new 3'terminus. GreA releases sequences of 2 to 3 nucleotides. The protein is Transcription elongation factor GreA of Metamycoplasma arthritidis (strain 158L3-1) (Mycoplasma arthritidis).